Reading from the N-terminus, the 208-residue chain is Large ribosomal subunit protein uL4 (208 aa).

Residues 45 to 95 form a disordered region; the sequence is RQGTHKAKTRSEVRGGGKKPFRQKGTGNARQGSSRSPIHVGGGTIFGPQPH. A compositionally biased stretch (polar residues) spans 69-80; that stretch reads GTGNARQGSSRS.

This sequence belongs to the universal ribosomal protein uL4 family. As to quaternary structure, part of the 50S ribosomal subunit.

In terms of biological role, one of the primary rRNA binding proteins, this protein initially binds near the 5'-end of the 23S rRNA. It is important during the early stages of 50S assembly. It makes multiple contacts with different domains of the 23S rRNA in the assembled 50S subunit and ribosome. Its function is as follows. Forms part of the polypeptide exit tunnel. The polypeptide is Large ribosomal subunit protein uL4 (Chlorobium chlorochromatii (strain CaD3)).